We begin with the raw amino-acid sequence, 81 residues long: Thrombin-like enzyme collinein-3 (81 aa).

Asp4 is a catalytic residue. Residues Cys51 and Cys68 are joined by a disulfide bond.

As to quaternary structure, monomer. In terms of tissue distribution, expressed by the vanom gland.

It localises to the secreted. Functionally, thrombin-like snake venom serine protease. This Crotalus durissus collilineatus (Brazilian rattlesnake) protein is Thrombin-like enzyme collinein-3.